The primary structure comprises 426 residues: D-ribulose kinase (426 aa).

Residues Asp-8, 12 to 15 (SGAR), Ser-72, and Asp-221 contribute to the substrate site. Residues Ser-243, Gly-281, and 376 to 380 (GGAKN) contribute to the ATP site.

This sequence belongs to the FGGY kinase family. A divalent metal cation serves as cofactor.

The catalysed reaction is D-ribulose + ATP = D-ribulose 5-phosphate + ADP + H(+). Exhibits ATP hydrolysis without substrate. Phosphorylates D-ribulose. This is D-ribulose kinase from Synechococcus elongatus (strain ATCC 33912 / PCC 7942 / FACHB-805) (Anacystis nidulans R2).